A 650-amino-acid chain; its full sequence is Histone-lysine N-methyltransferase family member SUVH9 (650 aa).

Disordered stretches follow at residues 1 to 24 (MGSS…KLEP) and 95 to 129 (PVEE…RSSE). A compositionally biased stretch (low complexity) spans 7 to 20 (PLDPSLNPSPSLIP). The segment covering 107 to 118 (YSTSDSSPSVAT) has biased composition (polar residues). One can recognise a YDG domain in the interval 205 to 352 (GSIPGVQVGD…FGVFKYRLER (148 aa)). A Pre-SET domain is found at 432 to 490 (SGCDCVNGCGSGCLCEAKNSGEIAYDYNGTLIRQKPLIHECGSACQCPPSCRNRVTQKG). The Zn(2+) site is built by Cys434, Cys436, Cys440, Cys444, Cys446, Cys472, Cys476, Cys478, and Cys482. Positions 493-637 (NRLEVFRSLE…PMTELSLDYG (145 aa)) constitute an SET domain.

The protein belongs to the class V-like SAM-binding methyltransferase superfamily. Histone-lysine methyltransferase family. Suvar3-9 subfamily. In terms of assembly, component of an RNA-directed DNA methylation (RdDM) complex that contains at least MORC6, MORC1/CRT1, MORC2, SWI3D and SUVH9. Interacts directly with MORC6, MORC2 and MORC1/CRT1. Interacts with SWI3B, SWI3C and SWI3D.

The protein localises to the nucleus. It localises to the chromosome. Its subcellular location is the centromere. Functionally, histone methyltransferase family member that plays a role in gene silencing. Together with MORC6 and SUVH2, regulates the silencing of some transposable elements (TEs). According to PubMed:19043555, the protein does not bind S-adenosyl-L-methionine and lacks methyltransferase activity. Instead, it may function downstream of DRM2 in RNA-directed DNA methylation, binding to methylated DNA and recruiting DNA-directed RNA polymerase V to chromatin. The protein is Histone-lysine N-methyltransferase family member SUVH9 (SUVH9) of Arabidopsis thaliana (Mouse-ear cress).